Reading from the N-terminus, the 394-residue chain is Protein STRICTOSIDINE SYNTHASE-LIKE 1 (394 aa).

A signal peptide spans 1–21 (MESLLLIAYAFLYLFLLSHEA). Basic and acidic residues predominate over residues 61–73 (GLEKRPNHSEDNP). Residues 61 to 92 (GLEKRPNHSEDNPPSRGWTGEPGLDPRGEGPY) form a disordered region. 3 N-linked (GlcNAc...) asparagine glycosylation sites follow: N67, N122, and N196.

This sequence belongs to the strictosidine synthase family.

It is found in the vacuole. The sequence is that of Protein STRICTOSIDINE SYNTHASE-LIKE 1 from Arabidopsis thaliana (Mouse-ear cress).